The following is a 423-amino-acid chain: 4-hydroxy-3-methylbut-2-en-1-yl diphosphate synthase (flavodoxin) (423 aa).

[4Fe-4S] cluster is bound by residues Cys-307, Cys-310, Cys-353, and Glu-360.

The protein belongs to the IspG family. The cofactor is [4Fe-4S] cluster.

The enzyme catalyses (2E)-4-hydroxy-3-methylbut-2-enyl diphosphate + oxidized [flavodoxin] + H2O + 2 H(+) = 2-C-methyl-D-erythritol 2,4-cyclic diphosphate + reduced [flavodoxin]. It participates in isoprenoid biosynthesis; isopentenyl diphosphate biosynthesis via DXP pathway; isopentenyl diphosphate from 1-deoxy-D-xylulose 5-phosphate: step 5/6. Its function is as follows. Converts 2C-methyl-D-erythritol 2,4-cyclodiphosphate (ME-2,4cPP) into 1-hydroxy-2-methyl-2-(E)-butenyl 4-diphosphate. The chain is 4-hydroxy-3-methylbut-2-en-1-yl diphosphate synthase (flavodoxin) from Brucella anthropi (strain ATCC 49188 / DSM 6882 / CCUG 24695 / JCM 21032 / LMG 3331 / NBRC 15819 / NCTC 12168 / Alc 37) (Ochrobactrum anthropi).